A 273-amino-acid chain; its full sequence is Hydroxyethylthiazole kinase (273 aa).

Residue Met-41 participates in substrate binding. 2 residues coordinate ATP: Arg-117 and Thr-170. Gly-197 contributes to the substrate binding site.

This sequence belongs to the Thz kinase family. It depends on Mg(2+) as a cofactor.

The enzyme catalyses 5-(2-hydroxyethyl)-4-methylthiazole + ATP = 4-methyl-5-(2-phosphooxyethyl)-thiazole + ADP + H(+). The protein operates within cofactor biosynthesis; thiamine diphosphate biosynthesis; 4-methyl-5-(2-phosphoethyl)-thiazole from 5-(2-hydroxyethyl)-4-methylthiazole: step 1/1. Catalyzes the phosphorylation of the hydroxyl group of 4-methyl-5-beta-hydroxyethylthiazole (THZ). The polypeptide is Hydroxyethylthiazole kinase (Clostridium acetobutylicum (strain ATCC 824 / DSM 792 / JCM 1419 / IAM 19013 / LMG 5710 / NBRC 13948 / NRRL B-527 / VKM B-1787 / 2291 / W)).